The sequence spans 261 residues: Phosphoadenosine phosphosulfate reductase (261 aa).

Belongs to the PAPS reductase family. CysH subfamily.

It catalyses the reaction [thioredoxin]-disulfide + sulfite + adenosine 3',5'-bisphosphate + 2 H(+) = [thioredoxin]-dithiol + 3'-phosphoadenylyl sulfate. It functions in the pathway sulfur metabolism; hydrogen sulfide biosynthesis; sulfite from sulfate: step 3/3. Functionally, the NADP dependent reduction of PAPS into sulfite involves thioredoxin which probably plays the role of a thiol carrier. This chain is Phosphoadenosine phosphosulfate reductase (MET16), found in Saccharomyces cerevisiae (strain ATCC 204508 / S288c) (Baker's yeast).